The chain runs to 1492 residues: Putative leucine-rich repeat-containing protein DDB_G0290503 (1492 aa).

One can recognise a PH domain in the interval 2 to 111; it reads SILLEGYLEK…WIEGIKDAIK (110 aa). 21 LRR repeats span residues 123-144, 180-204, 258-284, 329-351, 352-375, 389-413, 439-462, 519-543, 551-575, 579-603, 632-656, 728-752, 806-830, 831-855, 895-919, 927-951, 955-979, 1013-1036, 1044-1068, 1138-1164, and 1210-1232; these read LDGL…IKHL, IKSL…VEKL, QESL…QFEK, KNQF…SIVD, DKLK…EIDN, ISKI…SIDK, LEKL…ILEI, INEL…NQSS, LNQL…IIER, IDQL…NESS, LDEL…NQSS, LKSL…NQDS, INEL…NESS, LIQL…IIER, LNQL…NQSS, NEKL…NESL, FENL…IIDV, LQDL…ELKE, and NAHL…GFNE. A disordered region spans residues 1272 to 1292; that stretch reads RSSSSSLHQQQQMISPDLSNS. Positions 1274 to 1286 are enriched in low complexity; that stretch reads SSSSLHQQQQMIS. LRR repeat units lie at residues 1424–1444 and 1445–1468; these read SSEK…KYFF and AIAR…IFDM.

The chain is Putative leucine-rich repeat-containing protein DDB_G0290503 from Dictyostelium discoideum (Social amoeba).